Here is a 45-residue protein sequence, read N- to C-terminus: uncharacterized protein (45 aa).

This is an uncharacterized protein from Archaeoglobus fulgidus (strain ATCC 49558 / DSM 4304 / JCM 9628 / NBRC 100126 / VC-16).